Here is a 427-residue protein sequence, read N- to C-terminus: Histidine--tRNA ligase (427 aa).

Belongs to the class-II aminoacyl-tRNA synthetase family. Homodimer.

It is found in the cytoplasm. It catalyses the reaction tRNA(His) + L-histidine + ATP = L-histidyl-tRNA(His) + AMP + diphosphate + H(+). In Mycobacterium leprae (strain TN), this protein is Histidine--tRNA ligase (hisS).